We begin with the raw amino-acid sequence, 193 residues long: Sarcoplasmic calcium-binding protein (193 aa).

EF-hand domains follow at residues 16–40 (MYDI…NTLI), 57–92 (IMSN…LCCG), and 101–136 (CFKT…RSAF). Ca(2+)-binding residues include aspartate 18, aspartate 20, asparagine 22, tyrosine 24, aspartate 29, aspartate 70, asparagine 72, aspartate 74, glutamine 76, glutamate 81, aspartate 114, asparagine 116, aspartate 118, and glutamate 125.

In terms of assembly, monomer and dimer. In terms of tissue distribution, skeletal muscle (at protein level).

Its function is as follows. Like parvalbumins, SCPs seem to be more abundant in fast contracting muscles, but no functional relationship can be established from this distribution. In Scylla paramamosain (Mud crab), this protein is Sarcoplasmic calcium-binding protein.